The following is a 56-amino-acid chain: Small ribosomal subunit protein uS14 (56 aa).

Positions 21, 24, 39, and 42 each coordinate Zn(2+).

This sequence belongs to the universal ribosomal protein uS14 family. As to quaternary structure, component of the 40S small ribosomal subunit. Requires Zn(2+) as cofactor.

It is found in the cytoplasm. The protein localises to the cytosol. Its subcellular location is the rough endoplasmic reticulum. In terms of biological role, component of the small ribosomal subunit. The ribosome is a large ribonucleoprotein complex responsible for the synthesis of proteins in the cell. This is Small ribosomal subunit protein uS14 (rps29) from Hippocampus comes (Tiger tail seahorse).